The primary structure comprises 255 residues: 4-hydroxy-tetrahydrodipicolinate reductase (255 aa).

NAD(+)-binding positions include 8-13 (GATGRV), 88-90 (GTT), and 112-115 (ATNM). His144 (proton donor/acceptor) is an active-site residue. Position 145 (His145) interacts with (S)-2,3,4,5-tetrahydrodipicolinate. Residue Lys148 is the Proton donor of the active site. Position 154–155 (154–155 (GT)) interacts with (S)-2,3,4,5-tetrahydrodipicolinate.

The protein belongs to the DapB family.

Its subcellular location is the cytoplasm. The enzyme catalyses (S)-2,3,4,5-tetrahydrodipicolinate + NAD(+) + H2O = (2S,4S)-4-hydroxy-2,3,4,5-tetrahydrodipicolinate + NADH + H(+). It catalyses the reaction (S)-2,3,4,5-tetrahydrodipicolinate + NADP(+) + H2O = (2S,4S)-4-hydroxy-2,3,4,5-tetrahydrodipicolinate + NADPH + H(+). It functions in the pathway amino-acid biosynthesis; L-lysine biosynthesis via DAP pathway; (S)-tetrahydrodipicolinate from L-aspartate: step 4/4. Catalyzes the conversion of 4-hydroxy-tetrahydrodipicolinate (HTPA) to tetrahydrodipicolinate. The sequence is that of 4-hydroxy-tetrahydrodipicolinate reductase from Helicobacter hepaticus (strain ATCC 51449 / 3B1).